The sequence spans 49 residues: uncharacterized protein (49 aa).

Residues 6–28 (IYPLTVFYFFAIEMSVFCYYNWF) form a helical membrane-spanning segment.

The protein resides in the membrane. This is an uncharacterized protein from Saccharomyces cerevisiae (strain ATCC 204508 / S288c) (Baker's yeast).